Here is a 155-residue protein sequence, read N- to C-terminus: Egg cell-secreted protein 1.5 (155 aa).

A signal peptide spans 1-32 (MATKSTSKPLLLSFLMMSYLISTFHVITVAEG).

It belongs to the plant egg cell-secreted peptide family. As to expression, restricted to female reproductive tissues, specifically accumulating in storage vesicles of the unfertilized egg cell.

Its subcellular location is the cytoplasmic vesicle. The protein resides in the secreted. In terms of biological role, involved in the regulation of gamete interactions during the double fertilization and to prevent multiple-pollen tube attraction; mediates the redistribution of the gamete fusogen HAP2/GCS1 to the cell surface after secretion upon sperm arrival. This chain is Egg cell-secreted protein 1.5 (EC1.5), found in Arabidopsis thaliana (Mouse-ear cress).